The primary structure comprises 139 residues: MKKGTVLHSGISSVISRLGHTDTVVVCDAGLPIPSTTERIDLALTQGVPGFLQVVDVVTQEMQVEAAILAEEIKQHNPQLHETLLGQIERLQQHQGNTITVRYVSHEQFKLKTADSQAVIRSGECSPYANIILCAGVTF.

Histidine 20 functions as the Proton donor in the catalytic mechanism. Substrate contacts are provided by residues aspartate 28, histidine 106, and 128–130 (YAN).

It belongs to the RbsD / FucU family. RbsD subfamily. As to quaternary structure, homodecamer.

It localises to the cytoplasm. The catalysed reaction is beta-D-ribopyranose = beta-D-ribofuranose. It functions in the pathway carbohydrate metabolism; D-ribose degradation; D-ribose 5-phosphate from beta-D-ribopyranose: step 1/2. Catalyzes the interconversion of beta-pyran and beta-furan forms of D-ribose. The sequence is that of D-ribose pyranase from Cronobacter sakazakii (strain ATCC BAA-894) (Enterobacter sakazakii).